Consider the following 307-residue polypeptide: Nicotinamide/nicotinic acid mononucleotide adenylyltransferase 2 (307 aa).

2 residues coordinate NAD(+): serine 16 and phenylalanine 17. ATP is bound at residue histidine 24. NAD(+) contacts are provided by tryptophan 92 and threonine 95. Residues cysteine 164 and cysteine 165 are each lipidated (S-palmitoyl cysteine). NAD(+) is bound by residues glycine 200, aspartate 202, leucine 212, tryptophan 213, and arginine 232. Residue 271 to 274 (TKSR) participates in ATP binding.

It belongs to the eukaryotic NMN adenylyltransferase family. As to quaternary structure, monomer. Mg(2+) serves as cofactor. In terms of processing, degraded in response to injured neurite. Degradation is caused by polyubiquitination by MYCBP2 after recognition by FBXO45. Post-translationally, palmitoylated; palmitoylation is required for membrane association.

The protein localises to the golgi apparatus membrane. It is found in the cytoplasmic vesicle membrane. It localises to the cytoplasm. The protein resides in the cell projection. Its subcellular location is the axon. The enzyme catalyses beta-nicotinamide D-ribonucleotide + ATP + H(+) = diphosphate + NAD(+). The catalysed reaction is nicotinate beta-D-ribonucleotide + ATP + H(+) = deamido-NAD(+) + diphosphate. It participates in cofactor biosynthesis; NAD(+) biosynthesis; NAD(+) from nicotinamide D-ribonucleotide: step 1/1. The protein operates within cofactor biosynthesis; NAD(+) biosynthesis; deamido-NAD(+) from nicotinate D-ribonucleotide: step 1/1. Its activity is regulated as follows. Inhibited by P1-(adenosine-5')-P3-(nicotinamide-riboside-5')-triphosphate (Np3AD) and P1-(adenosine-5')-P4-(nicotinamide-riboside-5')-tetraphosphate (Np4AD). Nicotinamide/nicotinate-nucleotide adenylyltransferase that acts as an axon maintenance factor. Axon survival factor required for the maintenance of healthy axons: acts by delaying Wallerian axon degeneration, an evolutionarily conserved process that drives the loss of damaged axons. Catalyzes the formation of NAD(+) from nicotinamide mononucleotide (NMN) and ATP. Can also use the deamidated form; nicotinic acid mononucleotide (NaMN) as substrate but with a lower efficiency. Cannot use triazofurin monophosphate (TrMP) as substrate. Also catalyzes the reverse reaction, i.e. the pyrophosphorolytic cleavage of NAD(+). For the pyrophosphorolytic activity prefers NAD(+), NADH and NaAD as substrates and degrades nicotinic acid adenine dinucleotide phosphate (NHD) less effectively. Fails to cleave phosphorylated dinucleotides NADP(+), NADPH and NaADP(+). Also acts as an activator of ADP-ribosylation by supporting the catalytic activity of PARP16 and promoting mono-ADP-ribosylation of ribosomes by PARP16. May be involved in the maintenance of axonal integrity. This chain is Nicotinamide/nicotinic acid mononucleotide adenylyltransferase 2 (Nmnat2), found in Rattus norvegicus (Rat).